Consider the following 45-residue polypeptide: Large ribosomal subunit protein bL36 (45 aa).

A disordered region spans residues Met-1–Arg-20.

The protein belongs to the bacterial ribosomal protein bL36 family.

The protein is Large ribosomal subunit protein bL36 of Chlamydia abortus (strain DSM 27085 / S26/3) (Chlamydophila abortus).